Here is a 140-residue protein sequence, read N- to C-terminus: Putative pre-16S rRNA nuclease (140 aa).

The protein belongs to the YqgF nuclease family.

The protein localises to the cytoplasm. Could be a nuclease involved in processing of the 5'-end of pre-16S rRNA. In Halothermothrix orenii (strain H 168 / OCM 544 / DSM 9562), this protein is Putative pre-16S rRNA nuclease.